Here is a 417-residue protein sequence, read N- to C-terminus: MLKREMNIADYDAELWQAMEQEKVRQEEHIELIASENYTSPRVMQAQGSQLTNKYAEGYPGKRYYGGCEYVDIVEQLAIDRAKELFGADYANVQPHSGSQANFAVYTALLEPGDTVLGMNLAHGGHLTHGSPVNFSGKLYNIVPYGIDATGHIDYADLEKQAKEHKPKMIIGGFSAYSGVVDWAKMREIADSIGAYLFVDMAHVAGLVAAGVYPNPVPHAHVVTTTTHKTLAGPRGGLILAKGGSEELYKKLNSAVFPGGQGGPLMHVIAGKAVALKEAMEPEFKTYQQQVAKNAKAMVEVFLERGYKVVSGGTDNHLFLVDLVDKNLTGKEADAALGRANITVNKNSVPNDPKSPFVTSGIRVGTPAITRRGFKEAEAKELAGWMCDVLDSINDEAVIERIKGKVLDICARFPVYA.

Position 54 is an N6-acetyllysine (Lys-54). Residues Leu-121 and 125–127 contribute to the (6S)-5,6,7,8-tetrahydrofolate site; that span reads GHL. Position 229 is an N6-(pyridoxal phosphate)lysine (Lys-229). An N6-acetyllysine mark is found at Lys-250, Lys-285, and Lys-354. Residue 355 to 357 coordinates (6S)-5,6,7,8-tetrahydrofolate; that stretch reads SPF. Residue Lys-375 is modified to N6-acetyllysine.

The protein belongs to the SHMT family. As to quaternary structure, homodimer. Pyridoxal 5'-phosphate serves as cofactor.

Its subcellular location is the cytoplasm. The enzyme catalyses (6R)-5,10-methylene-5,6,7,8-tetrahydrofolate + glycine + H2O = (6S)-5,6,7,8-tetrahydrofolate + L-serine. Its pathway is one-carbon metabolism; tetrahydrofolate interconversion. The protein operates within amino-acid biosynthesis; glycine biosynthesis; glycine from L-serine: step 1/1. Its function is as follows. Catalyzes the reversible interconversion of serine and glycine with tetrahydrofolate (THF) serving as the one-carbon carrier. This reaction serves as the major source of one-carbon groups required for the biosynthesis of purines, thymidylate, methionine, and other important biomolecules. Also exhibits THF-independent aldolase activity toward beta-hydroxyamino acids, producing glycine and aldehydes, via a retro-aldol mechanism. The polypeptide is Serine hydroxymethyltransferase (Shigella sonnei (strain Ss046)).